The chain runs to 165 residues: Lipoprotein signal peptidase (165 aa).

A run of 2 helical transmembrane segments spans residues 66-86 (WQFW…LSLT) and 91-111 (NEPV…GNLV). Catalysis depends on residues Asp-121 and Asp-139. The helical transmembrane segment at 132–152 (WPAFNVADIAICIGAFLAFVA) threads the bilayer.

The protein belongs to the peptidase A8 family.

Its subcellular location is the cell inner membrane. It catalyses the reaction Release of signal peptides from bacterial membrane prolipoproteins. Hydrolyzes -Xaa-Yaa-Zaa-|-(S,diacylglyceryl)Cys-, in which Xaa is hydrophobic (preferably Leu), and Yaa (Ala or Ser) and Zaa (Gly or Ala) have small, neutral side chains.. Its pathway is protein modification; lipoprotein biosynthesis (signal peptide cleavage). Functionally, this protein specifically catalyzes the removal of signal peptides from prolipoproteins. In Nitratidesulfovibrio vulgaris (strain DP4) (Desulfovibrio vulgaris), this protein is Lipoprotein signal peptidase.